The primary structure comprises 156 residues: Endoribonuclease YbeY (156 aa).

Zn(2+) is bound by residues His-119, His-123, and His-129.

This sequence belongs to the endoribonuclease YbeY family. It depends on Zn(2+) as a cofactor.

It is found in the cytoplasm. Its function is as follows. Single strand-specific metallo-endoribonuclease involved in late-stage 70S ribosome quality control and in maturation of the 3' terminus of the 16S rRNA. This is Endoribonuclease YbeY from Buchnera aphidicola subsp. Cinara cedri (strain Cc).